Here is a 601-residue protein sequence, read N- to C-terminus: DDB1- and CUL4-associated factor 8 (601 aa).

Composition is skewed to polar residues over residues 1-24 (MSFS…SSPE) and 46-60 (VSLS…TTQA). A disordered region spans residues 1-150 (MSFSGEMSNG…DWLISEKTPL (150 aa)). Positions 39-50 (IEVEASDVSLSL) match the Nuclear export signal motif. A compositionally biased stretch (basic and acidic residues) spans 61–99 (ESRDSCSETSGEDKDSDSMDDTGHYSINDENRGNDQSHS). Positions 94 to 131 (NDQSHSEDEEEEEEEDEEEEAVRHRKRAQRKRANRDQE) form a coiled coil. Acidic residues predominate over residues 100 to 113 (EDEEEEEEEDEEEE). Positions 116–126 (RHRKRAQRKRA) are enriched in basic residues. The span at 127–140 (NRDQESSDEERALD) shows a compositional bias: basic and acidic residues. WD repeat units follow at residues 194 to 233 (GHSG…PVLE), 237 to 278 (GHKS…CCKN), 284 to 324 (QHKG…PASR), 332 to 372 (ESKV…ENVN), 388 to 427 (EAKA…GAEY), 435 to 475 (RNNA…IVQF), and 479 to 519 (DKGG…TELD). The tract at residues 561–601 (RRRRRDAGLGAGDAESDDSPSSSDSSDDDEDGPDRVQCIPS) is disordered.

It belongs to the WD repeat DCAF8 family.

The protein localises to the nucleus. The protein resides in the cytoplasm. This Xenopus laevis (African clawed frog) protein is DDB1- and CUL4-associated factor 8 (dcaf8).